The primary structure comprises 243 residues: DNA repair protein RecO (243 aa).

It belongs to the RecO family.

Functionally, involved in DNA repair and RecF pathway recombination. The sequence is that of DNA repair protein RecO from Xylella fastidiosa (strain M12).